A 1188-amino-acid chain; its full sequence is F-box only protein 38 (1188 aa).

An F-box domain is found at 30 to 75 (MNQLSHEVLCHIFRYLPLQDIMCMECLSRKLKEAVTLYLRVVRVVD). The interaction with KLF7 stretch occupies residues 59–119 (KLKEAVTLYL…LHPRYLERRR (61 aa)). 3 consecutive short sequence motifs (nuclear export signal) follow at residues 194-201 (LHLVGVNV), 307-316 (LEVDLGYLII), and 451-460 (LLPSLEFISL). The disordered stretch occupies residues 487-526 (ALVSNQNSNNDDNNAQNNNANIHDNNHHHPDDSDEENDFR). Residues 491–509 (NQNSNNDDNNAQNNNANIH) show a composition bias toward low complexity. A Phosphothreonine modification is found at threonine 591. 3 positions are modified to phosphoserine: serine 598, serine 600, and serine 606. Disordered stretches follow at residues 620–666 (RRYS…FPLE), 685–766 (MKAA…MEEG), and 787–909 (RTSR…STSD). Basic and acidic residues-rich tracts occupy residues 621-630 (RYSEREEKTG) and 685-699 (MKAARDIPEKKKNKD). Polar residues predominate over residues 703–740 (SCSSTTASTVGNSSSHNTASQSPDFVRTVNSGGSSEPS). Phosphoserine is present on residues serine 736 and serine 740. Residues 787 to 798 (RTSRCSDEERPS) are compositionally biased toward basic and acidic residues. Residues 849–861 (SSQPESCDVQSNE) are compositionally biased toward polar residues. The span at 889 to 900 (TKPRHAMKRKRT) shows a compositional bias: basic residues. A Nuclear localization signal motif is present at residues 896–899 (KRKR).

Part of the SCF (SKP1-CUL1-F-box) E3 ubiquitin-protein ligase complex SCF(FBXO38) composed of CUL1, SKP1, RBX1 and FBXO38. Interacts with KLF7. Interacts with PDCD1/PD-1.

The protein localises to the cytoplasm. It localises to the cytosol. The protein resides in the nucleus. It participates in protein modification; protein ubiquitination. Functionally, substrate recognition component of a SCF (SKP1-CUL1-F-box protein) E3 ubiquitin-protein ligase complex which mediates the ubiquitination and subsequent proteasomal degradation of PDCD1/PD-1, thereby regulating T-cells-mediated immunity. Required for anti-tumor activity of T-cells by promoting the degradation of PDCD1/PD-1; the PDCD1-mediated inhibitory pathway being exploited by tumors to attenuate anti-tumor immunity and facilitate tumor survival. May indirectly stimulate the activity of transcription factor KLF7, a regulator of neuronal differentiation, without promoting KLF7 ubiquitination. This is F-box only protein 38 from Homo sapiens (Human).